The sequence spans 1440 residues: Glucose transporter type 1 (1440 aa).

The N-terminal stretch at 1–23 (MAFLCAPGLTFFLTYSIFSAVLG) is a signal peptide. Residues 24–67 (MLQFGYNTGVINAPEKNIENFMKDVYKDRYGEDISEEFIQQLYS) lie on the Cytoplasmic side of the membrane. The chain crosses the membrane as a helical span at residues 68–88 (VAVSIFAIGGMLGGFSGGWMA). Residues 89-95 (NRFGRKG) are Extracellular-facing. The helical transmembrane segment at 96–116 (GLLLNNVLGIAGACLMGFTKV) threads the bilayer. Topologically, residues 117–127 (SHSYEMLFLGR) are cytoplasmic. Residues 128–148 (FIIGVNCGLNTSLVPMYISEI) form a helical membrane-spanning segment. At 149–162 (APLNLRGGLGTVNQ) the chain is on the extracellular side. Gln162 contacts D-glucose. Residues 163 to 183 (LAVTVGLLLSQVLGIEQILGT) form a helical membrane-spanning segment. Residues 184–186 (NEG) are Cytoplasmic-facing. The helical transmembrane segment at 187-207 (WPILLGLAICPAILQLILLPV) threads the bilayer. Residues 208-272 (CPESPRYLLI…LICSPTLRPP (65 aa)) lie on the Extracellular side of the membrane. The helical transmembrane segment at 273–293 (LIIGIVMQLSQQFSGINAVFY) threads the bilayer. Residues 283-284 (QQ) and Asn289 each bind D-glucose. The Cytoplasmic portion of the chain corresponds to 294-310 (YSTSLFMSSGLTEESAK). The chain crosses the membrane as a helical span at residues 311–331 (FATIGIGAIMVVMTLVSIPLM). At 332-339 (DRTGRRTL) the chain is on the extracellular side. A helical transmembrane segment spans residues 340 to 360 (HLYGLGGMFIFSIFITISFLI). Topologically, residues 361-372 (KEMIDWMSYLSV) are cytoplasmic. The chain crosses the membrane as a helical span at residues 373-393 (VATLGFVVFFAVGPGSIPWMI). Trp391 contacts D-glucose. Topologically, residues 394–405 (TAELFSQGPRPS) are extracellular. A helical membrane pass occupies residues 406–426 (AMAIAVLVNWMANFVVGIGFP). The Cytoplasmic segment spans residues 427–429 (SMK). Residues 430–450 (TALENYTFLPFSVFLAIFWIF) form a helical membrane-spanning segment. The Extracellular segment spans residues 451 to 534 (TYKKVPETKN…GPYPLSDSTN (84 aa)). Residues Asn460 and Asn480 are each glycosylated (N-linked (GlcNAc...) asparagine). The helical transmembrane segment at 535–555 (LLGPGSSSYGPGGVLGLAGSG) threads the bilayer. Residues 556 to 1440 (SGLGGQCYTN…RKYTDFLRKK (885 aa)) lie on the Cytoplasmic side of the membrane. 6 disordered regions span residues 628-708 (ERFL…SRYA), 725-808 (QANP…HSVM), 966-987 (APEG…SELP), 1000-1083 (FLAD…GSYH), 1304-1330 (LEGA…PLTH), and 1380-1401 (ANSP…GHHV). Positions 669 to 678 (PPDSASVRST) are enriched in polar residues. The span at 686 to 704 (QPQQVHHQQQQVHHQQQHQ) shows a compositional bias: low complexity. Residues 730–739 (QAPPQQPAPP) are compositionally biased toward pro residues. Over residues 754 to 789 (CQQRKHSHSPHHSRHTSPHSHHHHSHHSRHSRRSRR) the composition is skewed to basic residues. Residues 1313 to 1330 (STTSEHSSSLPSPQPLTH) are compositionally biased toward low complexity.

It belongs to the major facilitator superfamily. Sugar transporter (TC 2.A.1.1) family. Glucose transporter subfamily.

The protein resides in the membrane. Its function is as follows. Facilitative glucose transporter. The protein is Glucose transporter type 1 (Glut1) of Drosophila melanogaster (Fruit fly).